A 286-amino-acid polypeptide reads, in one-letter code: Transcription initiation factor IIA large subunit (286 aa).

3 disordered regions span residues 120–145, 167–195, and 208–236; these read NTVE…ADVT, TVEN…KEKE, and KRSA…EGEE. Residues 175–195 are compositionally biased toward basic and acidic residues; it reads SEKKDDEEKEEDVEKTRKEKE. The span at 214–236 shows a compositional bias: acidic residues; the sequence is DTDEVGSELDDSDDDYLISEGEE.

This sequence belongs to the TFIIA subunit 1 family. In terms of assembly, TFIIA is a heterodimer composed of the large TOA1 and a small TOA2 subunits. Interacts with KAP122.

It is found in the cytoplasm. It localises to the nucleus. Functionally, TFIIA is a component of the transcription machinery of RNA polymerase II and implicated in the regulation of basal transcription. Interacts with TBP (the TATA-binding protein). This is Transcription initiation factor IIA large subunit (TOA1) from Saccharomyces cerevisiae (strain ATCC 204508 / S288c) (Baker's yeast).